Here is a 452-residue protein sequence, read N- to C-terminus: Trigger factor (452 aa).

The PPIase FKBP-type domain maps to Gly-171–Ala-256.

It belongs to the FKBP-type PPIase family. Tig subfamily.

Its subcellular location is the cytoplasm. It catalyses the reaction [protein]-peptidylproline (omega=180) = [protein]-peptidylproline (omega=0). Involved in protein export. Acts as a chaperone by maintaining the newly synthesized protein in an open conformation. Functions as a peptidyl-prolyl cis-trans isomerase. The polypeptide is Trigger factor (Afipia carboxidovorans (strain ATCC 49405 / DSM 1227 / KCTC 32145 / OM5) (Oligotropha carboxidovorans)).